The chain runs to 448 residues: Glutamyl-tRNA reductase (448 aa).

Substrate contacts are provided by residues 49–52 (TCNR), Ser109, 114–116 (ETQ), and Gln120. The active-site Nucleophile is the Cys50. Position 189–194 (189–194 (GAGEMS)) interacts with NADP(+).

Belongs to the glutamyl-tRNA reductase family. As to quaternary structure, homodimer.

The catalysed reaction is (S)-4-amino-5-oxopentanoate + tRNA(Glu) + NADP(+) = L-glutamyl-tRNA(Glu) + NADPH + H(+). Its pathway is porphyrin-containing compound metabolism; protoporphyrin-IX biosynthesis; 5-aminolevulinate from L-glutamyl-tRNA(Glu): step 1/2. Catalyzes the NADPH-dependent reduction of glutamyl-tRNA(Glu) to glutamate 1-semialdehyde (GSA). In Staphylococcus aureus (strain Mu3 / ATCC 700698), this protein is Glutamyl-tRNA reductase.